A 360-amino-acid polypeptide reads, in one-letter code: Phospho-N-acetylmuramoyl-pentapeptide-transferase (360 aa).

A run of 10 helical transmembrane segments spans residues 27-47 (IVSL…LIGW), 72-92 (PTMG…MWAY), 94-114 (SNPY…VGFV), 132-152 (WKYF…YCIG), 168-188 (IMPQ…VGTS), 199-219 (GLAI…AWAT), 236-256 (AGEL…FLWF), 263-283 (VFMG…IAVL), 288-308 (FLLV…ILQV), and 338-358 (VIVR…ATLK).

The protein belongs to the glycosyltransferase 4 family. MraY subfamily. The cofactor is Mg(2+).

The protein localises to the cell inner membrane. The enzyme catalyses UDP-N-acetyl-alpha-D-muramoyl-L-alanyl-gamma-D-glutamyl-meso-2,6-diaminopimeloyl-D-alanyl-D-alanine + di-trans,octa-cis-undecaprenyl phosphate = di-trans,octa-cis-undecaprenyl diphospho-N-acetyl-alpha-D-muramoyl-L-alanyl-D-glutamyl-meso-2,6-diaminopimeloyl-D-alanyl-D-alanine + UMP. The protein operates within cell wall biogenesis; peptidoglycan biosynthesis. Its function is as follows. Catalyzes the initial step of the lipid cycle reactions in the biosynthesis of the cell wall peptidoglycan: transfers peptidoglycan precursor phospho-MurNAc-pentapeptide from UDP-MurNAc-pentapeptide onto the lipid carrier undecaprenyl phosphate, yielding undecaprenyl-pyrophosphoryl-MurNAc-pentapeptide, known as lipid I. The chain is Phospho-N-acetylmuramoyl-pentapeptide-transferase from Edwardsiella ictaluri (strain 93-146).